Consider the following 221-residue polypeptide: Pre-hexon-linking protein VIII (221 aa).

A Phosphothreonine; by host modification is found at Thr-65. A propeptide spanning residues 113-150 (AAPWSGVKTGSFCGRGLQLAEPPTTAIYPSGLFHLGRG) is cleaved from the precursor.

It belongs to the adenoviridae hexon-linking protein family. In terms of assembly, interacts with the peripentonal hexons as well as the hexons in the facets. Part of a complex composed of the core-capsid bridging protein, the endosome lysis protein VI and the hexon-linking protein VIII; these interactions bridge the virus core to the capsid. Post-translationally, cleaved by the viral protease during virion maturation. May cause the middle segment to be shed from the capsid.

It is found in the virion. The protein localises to the host nucleus. In terms of biological role, structural component of the virion that acts as a cement protein on the capsid interior and which glue the peripentonal hexons and group-of-nine hexons together. This Sus scrofa (Pig) protein is Pre-hexon-linking protein VIII.